We begin with the raw amino-acid sequence, 397 residues long: tRNA(Met) cytidine acetate ligase (397 aa).

ATP is bound by residues 7-20, glycine 101, asparagine 152, and arginine 177; that span reads VTEY…HIYH.

Belongs to the TmcAL family.

The protein resides in the cytoplasm. It catalyses the reaction cytidine(34) in elongator tRNA(Met) + acetate + ATP = N(4)-acetylcytidine(34) in elongator tRNA(Met) + AMP + diphosphate. In terms of biological role, catalyzes the formation of N(4)-acetylcytidine (ac(4)C) at the wobble position of elongator tRNA(Met), using acetate and ATP as substrates. First activates an acetate ion to form acetyladenylate (Ac-AMP) and then transfers the acetyl group to tRNA to form ac(4)C34. In Leuconostoc citreum (strain KM20), this protein is tRNA(Met) cytidine acetate ligase.